The sequence spans 342 residues: Photosystem II D2 protein (342 aa).

Topologically, residues 1–29 (ERGWFDILDDWLKRDRFVFVGWSGILLFP) are cytoplasmic. Residues 30-50 (CAYLALGGWLTGTTFVTSWYT) traverse the membrane as a helical segment. At 51–113 (HGLASSYLEG…IALHGAFGLI (63 aa)) the chain is on the lumenal side. His107 serves as a coordination point for chlorophyll a. A helical membrane pass occupies residues 114–130 (GFMLRQFEIARLVGVRP). Residues Gln119 and Asn132 each contribute to the pheophytin a site. Residues 131-141 (YNAIAFSAPIA) lie on the Cytoplasmic side of the membrane. Residues 142-155 (VFVSVFLIYPLGQS) form a helical membrane-spanning segment. Over 156-196 (SWFFAPSFGVAAIFRFLLFFQGFHNWTLNPFHMMGVAGVLG) the chain is Lumenal. His187 contacts chlorophyll a. The chain crosses the membrane as a helical span at residues 197 to 217 (GALLCAIHGATVENTLFQDGE). A plastoquinone-binding residues include His204 and Phe251. His204 contributes to the Fe cation binding site. The Cytoplasmic segment spans residues 218–267 (GASTFRAFNPTQAEETYSMVTANRFWSQIFGIAFSNKRWLHFFMLFVPVT). His258 is a binding site for Fe cation. A helical transmembrane segment spans residues 268-284 (GLWMSAIGVVGLALNLR). Topologically, residues 285–342 (SYDFISQEIRAAEDPEFETFYTKNLLLNEGIRAWMAPQDQPHENFVFPEEVLPRGNAL) are lumenal.

The protein belongs to the reaction center PufL/M/PsbA/D family. PSII is composed of 1 copy each of membrane proteins PsbA, PsbB, PsbC, PsbD, PsbE, PsbF, PsbH, PsbI, PsbJ, PsbK, PsbL, PsbM, PsbT, PsbX, PsbY, PsbZ, Psb30/Ycf12, peripheral proteins PsbO, CyanoQ (PsbQ), PsbU, PsbV and a large number of cofactors. It forms dimeric complexes. The D1/D2 heterodimer binds P680, chlorophylls that are the primary electron donor of PSII, and subsequent electron acceptors. It shares a non-heme iron and each subunit binds pheophytin, quinone, additional chlorophylls, carotenoids and lipids. There is also a Cl(-1) ion associated with D1 and D2, which is required for oxygen evolution. The PSII complex binds additional chlorophylls, carotenoids and specific lipids. serves as cofactor.

It localises to the cellular thylakoid membrane. It carries out the reaction 2 a plastoquinone + 4 hnu + 2 H2O = 2 a plastoquinol + O2. Photosystem II (PSII) is a light-driven water:plastoquinone oxidoreductase that uses light energy to abstract electrons from H(2)O, generating O(2) and a proton gradient subsequently used for ATP formation. It consists of a core antenna complex that captures photons, and an electron transfer chain that converts photonic excitation into a charge separation. The D1/D2 (PsbA/PsbD) reaction center heterodimer binds P680, the primary electron donor of PSII as well as several subsequent electron acceptors. D2 is needed for assembly of a stable PSII complex. This Thermostichus vulcanus (Synechococcus vulcanus) protein is Photosystem II D2 protein.